Reading from the N-terminus, the 242-residue chain is MSNPRSLEEEKYDMSGARLALILCVTKAREGSEEDLDALEHMFRQLRFESTMKRDPTAEQFQEELEKFQQAIDSREDPVSCAFVVLMAHGREGFLKGEDGEMVKLENLFEALNNKNCQALRAKPKVYIIQACRGEQRDPGETVGGDEIVMVIKDSPQTIPTYTDALHVYSTVEGYIAYRHDQKGSCFIQTLVDVFTKRKGHILELLTEVTRRMAEAELVQEGKARKTNPEIQSTLRKRLYLQ.

A propeptide spanning residues 1 to 5 (MSNPR) is cleaved from the precursor. Catalysis depends on residues histidine 89 and cysteine 132. The propeptide occupies 147 to 152 (EIVMVI).

It belongs to the peptidase C14A family. In terms of assembly, heterodimer of a large and a small subunit, both processed from the precursor; the mature active form is a p17/p10 dimer and the intermediate form a p20/p8 dimer. Post-translationally, maturation by proteolytic processing appears to be a two-step process. The precursor is processed by KLK7 to yield the p20/p8 intermediate form which acts on the precursor to yield the p17/p10 mature form. Initially, cleavage between Ile-152 and Lys-153 has been proposed to yield the large and small subunits of the active enzyme. Expressed in keratinocytes of adult skin suprabasal layers (from spinous layers to the stratum granulosum and stratum corneum) (at protein level). Expressed in keratinocytes of hair shaft and sebaceous glands (at protein level). In psoriatic skin only expressed at very low levels. The p17/10 mature form is expressed in epidermis stratum corneum, the p20/p8 intermediate form in epidermis upper granular cells of the stratum granulosum.

It localises to the cytoplasm. The protein localises to the nucleus. With respect to regulation, inhibited by caspase-1 inhibitor YVAD-FMK and the pan-caspase inhibitor VAD-FMK. In terms of biological role, non-apoptotic caspase involved in epidermal differentiation. Is the predominant caspase in epidermal stratum corneum. Seems to play a role in keratinocyte differentiation and is required for cornification. Regulates maturation of the epidermis by proteolytically processing filaggrin. In vitro has a preference for the substrate [WY]-X-X-D motif and is active on the synthetic caspase substrate WEHD-ACF. Involved in processing of prosaposin in the epidermis. May be involved in retinal pigment epithelium cell barrier function. Involved in DNA degradation in differentiated keratinocytes probably by cleaving DFFA/ICAD leading to liberation of DFFB/CAD. The protein is Caspase-14 (CASP14) of Homo sapiens (Human).